The primary structure comprises 260 residues: Triosephosphate isomerase (260 aa).

A substrate-binding site is contributed by 11-13; the sequence is NWK. H103 (electrophile) is an active-site residue. The active-site Proton acceptor is the E175. Substrate is bound by residues G181, S220, and 241-242; that span reads GG.

The protein belongs to the triosephosphate isomerase family. In terms of assembly, homodimer.

It localises to the cytoplasm. The catalysed reaction is D-glyceraldehyde 3-phosphate = dihydroxyacetone phosphate. It participates in carbohydrate biosynthesis; gluconeogenesis. The protein operates within carbohydrate degradation; glycolysis; D-glyceraldehyde 3-phosphate from glycerone phosphate: step 1/1. Its function is as follows. Involved in the gluconeogenesis. Catalyzes stereospecifically the conversion of dihydroxyacetone phosphate (DHAP) to D-glyceraldehyde-3-phosphate (G3P). The polypeptide is Triosephosphate isomerase (Shewanella piezotolerans (strain WP3 / JCM 13877)).